The primary structure comprises 51 residues: Large ribosomal subunit protein bL33 (51 aa).

It belongs to the bacterial ribosomal protein bL33 family.

This chain is Large ribosomal subunit protein bL33, found in Methylococcus capsulatus (strain ATCC 33009 / NCIMB 11132 / Bath).